Here is a 557-residue protein sequence, read N- to C-terminus: 2-succinyl-5-enolpyruvyl-6-hydroxy-3-cyclohexene-1-carboxylate synthase (557 aa).

The protein belongs to the TPP enzyme family. MenD subfamily. In terms of assembly, homodimer. Mg(2+) serves as cofactor. It depends on Mn(2+) as a cofactor. Thiamine diphosphate is required as a cofactor.

The enzyme catalyses isochorismate + 2-oxoglutarate + H(+) = 5-enolpyruvoyl-6-hydroxy-2-succinyl-cyclohex-3-ene-1-carboxylate + CO2. It functions in the pathway quinol/quinone metabolism; 1,4-dihydroxy-2-naphthoate biosynthesis; 1,4-dihydroxy-2-naphthoate from chorismate: step 2/7. It participates in quinol/quinone metabolism; menaquinone biosynthesis. Catalyzes the thiamine diphosphate-dependent decarboxylation of 2-oxoglutarate and the subsequent addition of the resulting succinic semialdehyde-thiamine pyrophosphate anion to isochorismate to yield 2-succinyl-5-enolpyruvyl-6-hydroxy-3-cyclohexene-1-carboxylate (SEPHCHC). The polypeptide is 2-succinyl-5-enolpyruvyl-6-hydroxy-3-cyclohexene-1-carboxylate synthase (Staphylococcus aureus (strain Mu3 / ATCC 700698)).